The chain runs to 451 residues: Phenylalanine-4-hydroxylase (451 aa).

The residue at position 16 (Ser16) is a Phosphoserine; by PKA. The 79-residue stretch at 35–113 (SLIFSLKEEV…TVHELSRDKK (79 aa)) folds into the ACT domain. The Fe cation site is built by His284, His289, and Glu329.

This sequence belongs to the biopterin-dependent aromatic amino acid hydroxylase family. In terms of assembly, homodimer and homotetramer. Fe(2+) is required as a cofactor. Phosphorylation at Ser-16 increases basal activity and facilitates activation by the substrate phenylalanine.

The enzyme catalyses (6R)-L-erythro-5,6,7,8-tetrahydrobiopterin + L-phenylalanine + O2 = (4aS,6R)-4a-hydroxy-L-erythro-5,6,7,8-tetrahydrobiopterin + L-tyrosine. Its pathway is amino-acid degradation; L-phenylalanine degradation; acetoacetate and fumarate from L-phenylalanine: step 1/6. Its activity is regulated as follows. N-terminal region of PAH is thought to contain allosteric binding sites for phenylalanine and to constitute an 'inhibitory' domain that regulates the activity of a catalytic domain in the C-terminal portion of the molecule. Its function is as follows. Catalyzes the hydroxylation of L-phenylalanine to L-tyrosine. This chain is Phenylalanine-4-hydroxylase (PAH), found in Bos taurus (Bovine).